The chain runs to 375 residues: 2-methylcitrate synthase (375 aa).

Residues Lys72 and His187 each contribute to the substrate site. The active site involves His222. 255–259 (KIMGF) serves as a coordination point for CoA. His261 is a catalytic residue. Arg270 contributes to the substrate binding site. Residue Asp312 is part of the active site. Substrate is bound by residues Arg337 and Arg356.

Belongs to the citrate synthase family. In terms of assembly, homodimer.

The enzyme catalyses propanoyl-CoA + oxaloacetate + H2O = (2S,3S)-2-methylcitrate + CoA + H(+). It carries out the reaction oxaloacetate + acetyl-CoA + H2O = citrate + CoA + H(+). It participates in organic acid metabolism; propanoate degradation. The protein operates within carbohydrate metabolism; tricarboxylic acid cycle; isocitrate from oxaloacetate: step 1/2. Functionally, involved in the catabolism of short chain fatty acids (SCFA) via the tricarboxylic acid (TCA)(acetyl degradation route) and via the 2-methylcitrate cycle II (propionate degradation route). Catalyzes the Claisen condensation of propionyl-CoA and oxaloacetate (OAA) to yield 2-methylcitrate (2-MC) and CoA. Catalyzes the condensation of oxaloacetate with acetyl-CoA. This chain is 2-methylcitrate synthase (prpC), found in Shewanella oneidensis (strain ATCC 700550 / JCM 31522 / CIP 106686 / LMG 19005 / NCIMB 14063 / MR-1).